The primary structure comprises 318 residues: Apo-salmochelin esterase (318 aa).

A helical membrane pass occupies residues 13 to 32; that stretch reads KAIFFHLSCLTLICSAQVYA. Residues serine 189 and histidine 287 contribute to the active site.

It belongs to the esterase D family. As to quaternary structure, monomer.

It is found in the cell inner membrane. It catalyses the reaction enterobactin + H2O = N-(2,3-dihydroxybenzoyl)-L-serine trimer. It carries out the reaction monoglucosyl-enterobactin + H2O = [N-(2,3-dihydroxybenzoyl)-L-seryl]2-N-(C-5-[deoxy-beta-D-glucosyl]-2,3-dihydroxybenzoyl)-L-serine + H(+). The catalysed reaction is diglucosyl-enterobactin + H2O = N-(2,3-dihydroxybenzoyl)-L-seryl-[N-(C-5-[deoxy-beta-D-glucosyl]-2,3-dihydroxybenzoyl)-L-serine]2 + H(+). The enzyme catalyses triglucosyl-enterobactin + H2O = [N-(C-5-[deoxy-beta-D-glucosyl]-2,3-dihydroxybenzoyl)-L-serine]3 + H(+). Functionally, catalyzes the hydrolysis of both the apo and Fe3(+)-bound forms of enterobactin (Ent), monoglucosyl-C-Ent (MGE), diglucosyl-C-Ent (DGE) and triglucosyl-C-Ent (TGE). It prefers apo siderophores as substrates and hydrolyzes the Fe3(+)-bound siderophores very inefficiently. Tends to hydrolyze the trilactone just once to produce linearized trimers. May hydrolyze and linearize some or all of apo enterobactins while they are being exported. This is Apo-salmochelin esterase from Escherichia coli O6:H1 (strain CFT073 / ATCC 700928 / UPEC).